The following is a 158-amino-acid chain: Cyclic pyranopterin monophosphate synthase (158 aa).

Residues 76–78 and 114–115 each bind substrate; these read LCH and ME. Asp129 is a catalytic residue.

This sequence belongs to the MoaC family. In terms of assembly, homohexamer; trimer of dimers.

The enzyme catalyses (8S)-3',8-cyclo-7,8-dihydroguanosine 5'-triphosphate = cyclic pyranopterin phosphate + diphosphate. It functions in the pathway cofactor biosynthesis; molybdopterin biosynthesis. Functionally, catalyzes the conversion of (8S)-3',8-cyclo-7,8-dihydroguanosine 5'-triphosphate to cyclic pyranopterin monophosphate (cPMP). The protein is Cyclic pyranopterin monophosphate synthase of Brucella anthropi (strain ATCC 49188 / DSM 6882 / CCUG 24695 / JCM 21032 / LMG 3331 / NBRC 15819 / NCTC 12168 / Alc 37) (Ochrobactrum anthropi).